Consider the following 334-residue polypeptide: Short-chain dehydrogenase/reductase (334 aa).

NADP(+)-binding residues include L44, K68, D93, N120, and K152. Catalysis depends on proton donor residues S176 and Y205. Y205, K209, and N239 together coordinate NADP(+). K209 serves as the catalytic Lowers pKa of active site Tyr.

This sequence belongs to the short-chain dehydrogenases/reductases (SDR) family.

Its pathway is mycotoxin biosynthesis. Its function is as follows. Short-chain dehydrogenase/reductase; part of the 2 gene clusters that mediate the biosynthesis of fusicoccins, diterpene glucosides that display phytohormone-like activity and function as potent activators of plasma membrane H(+)-ATPases in plants by modifying 14-3-3 proteins and cause the plant disease constriction canker. The first step in the pathway is performed by the fusicoccadiene synthase PaFS that possesses both prenyl transferase and terpene cyclase activity, converting isopentenyl diphosphate and dimethylallyl diphosphate into geranylgeranyl diphosphate (GGDP) and successively converting GGDP into fusicocca-2,10(14)-diene, a precursor for fusicoccin H. The second step is the oxidation at the C-8 position by the cytochrome P450 monooxygenase PaP450-2 to yield fusicocca-2,10(14)-diene-8-beta-ol. The cytochrome P450 monooxygenase PaP450-1 then catalyzes the hydroxylation at the C-16 position to produce fusicocca-2,10(14)-diene-8-beta,16-diol. The dioxygenase fc-dox then catalyzes the 16-oxydation of fusicocca-2,10(14)-diene-8-beta,16-diol to yield an aldehyde (8-beta-hydroxyfusicocca-1,10(14)-dien-16-al). The short-chain dehydrogenase/reductase fc-sdr catalyzes the reduction of the aldehyde to yield fusicocca-1,10(14)-diene-8-beta,16-diol. The next step is the hydroxylation at C-9 performed by the cytochrome P450 monooxygenase PaP450-3 that leads to fusicoccin H aglycon which is glycosylated to fusicoccin H by the O-glycosyltransferase PaGT. Hydroxylation at C-12 by the cytochrome P450 monooxygenase PaP450-4 leads then to the production of fusicoccin Q and is followed by methylation by the O-methyltransferase PaMT to yield fusicoccin P. Fusicoccin P is further converted to fusicoccin J via prenylation by the O-glucose prenyltransferase PaPT. Cytochrome P450 monooxygenase PaP450-5 then performs hydroxylation at C-19 to yield dideacetyl-fusicoccin A which is acetylated to 3'-O-deacetyl-fusicoccin A by the O-acetyltransferase PaAT-2. Finally, a another acetylation by the O-acetyltransferase PaAT-1 yields fusicoccin A. The polypeptide is Short-chain dehydrogenase/reductase (Phomopsis amygdali (Fusicoccum amygdali)).